Consider the following 81-residue polypeptide: MRASMFLALAGLVLLFVVCYASESEEKEFPRELLFKFFAVDDFKGEERACKGVFDACTPGKNECCPNRVCSDKHKWCKWKL.

The N-terminal stretch at M1–A21 is a signal peptide. The propeptide occupies S22–R48. Disulfide bonds link C50/C65, C57/C70, and C64/C77.

It belongs to the neurotoxin 10 (Hwtx-1) family. 23 (HwTx-I) subfamily. Expressed by the venom gland.

The protein resides in the secreted. Functionally, lethal toxin with multiple biological activities. Inhibits voltage-gated TTX-sensitive sodium channels in DRG neurons (IC(50)=55 nM) and also shows activity when directly tested on Nav1.7/SCN9A (IC(50)=25.1-630 nM). Inhibits N-type calcium channels (Cav2.2/CACNA1B (IC(50)=100 nM)). Also blocks neuromuscular transmission. In vivo, intrathecal injected toxin shows analgesic activity in the rat formalin-induced pain model, without induction of motor dysfunction in rats. The chain is Mu/omega-theraphotoxin-Hs1a from Cyriopagopus schmidti (Chinese bird spider).